Reading from the N-terminus, the 182-residue chain is UPF0316 protein BCG9842_B1857 (182 aa).

A run of 3 helical transmembrane segments spans residues Leu-6–Val-26, Ser-32–Phe-52, and Trp-58–Ile-78.

This sequence belongs to the UPF0316 family.

It localises to the cell membrane. The sequence is that of UPF0316 protein BCG9842_B1857 from Bacillus cereus (strain G9842).